The following is a 313-amino-acid chain: CRISPR-associated endonuclease Cas1 1 (313 aa).

Residues Glu-144, His-211, and Asp-224 each contribute to the Mn(2+) site. A disordered region spans residues 288-313 (PPLDAPEAVDPVIPPEEPSGDDGHRG).

Belongs to the CRISPR-associated endonuclease Cas1 family. As to quaternary structure, homodimer, forms a heterotetramer with a Cas2 homodimer. It depends on Mg(2+) as a cofactor. The cofactor is Mn(2+).

Functionally, CRISPR (clustered regularly interspaced short palindromic repeat), is an adaptive immune system that provides protection against mobile genetic elements (viruses, transposable elements and conjugative plasmids). CRISPR clusters contain spacers, sequences complementary to antecedent mobile elements, and target invading nucleic acids. CRISPR clusters are transcribed and processed into CRISPR RNA (crRNA). Acts as a dsDNA endonuclease. Involved in the integration of spacer DNA into the CRISPR cassette. This Rhodospirillum rubrum (strain ATCC 11170 / ATH 1.1.1 / DSM 467 / LMG 4362 / NCIMB 8255 / S1) protein is CRISPR-associated endonuclease Cas1 1.